Consider the following 525-residue polypeptide: GMP synthase [glutamine-hydrolyzing] (525 aa).

The 199-residue stretch at arginine 9 to leucine 207 folds into the Glutamine amidotransferase type-1 domain. The Nucleophile role is filled by cysteine 86. Active-site residues include histidine 181 and glutamate 183. The region spanning tryptophan 208–arginine 400 is the GMPS ATP-PPase domain. Residue serine 235 to serine 241 coordinates ATP.

Homodimer.

The enzyme catalyses XMP + L-glutamine + ATP + H2O = GMP + L-glutamate + AMP + diphosphate + 2 H(+). The protein operates within purine metabolism; GMP biosynthesis; GMP from XMP (L-Gln route): step 1/1. In terms of biological role, catalyzes the synthesis of GMP from XMP. The protein is GMP synthase [glutamine-hydrolyzing] of Pseudomonas savastanoi pv. phaseolicola (strain 1448A / Race 6) (Pseudomonas syringae pv. phaseolicola (strain 1448A / Race 6)).